Reading from the N-terminus, the 190-residue chain is Lipid A acyltransferase PagP (190 aa).

Residues 1 to 29 (MYVAMIIRKYFLIIALLVMPWLAIPSVSA) form the signal peptide. Active-site residues include His62, Asp105, and Ser106.

This sequence belongs to the lipid A palmitoyltransferase family. As to quaternary structure, homodimer.

The protein resides in the cell outer membrane. It carries out the reaction a lipid A + a 1,2-diacyl-sn-glycero-3-phosphocholine = a hepta-acyl lipid A + a 2-acyl-sn-glycero-3-phosphocholine. The enzyme catalyses a lipid IVA + a 1,2-diacyl-sn-glycero-3-phosphocholine = a lipid IVB + a 2-acyl-sn-glycero-3-phosphocholine. The catalysed reaction is a lipid IIA + a 1,2-diacyl-sn-glycero-3-phosphocholine = a lipid IIB + a 2-acyl-sn-glycero-3-phosphocholine. Its function is as follows. Transfers a fatty acid residue from the sn-1 position of a phospholipid to the N-linked hydroxyfatty acid chain on the proximal unit of lipid A or its precursors. The chain is Lipid A acyltransferase PagP from Salmonella typhi.